The following is a 728-amino-acid chain: Catalase-peroxidase 1 (728 aa).

The tryptophyl-tyrosyl-methioninium (Trp-Tyr) (with M-244) cross-link spans 91–218; sequence WHSAGTYRTA…LAAVQMGLIY (128 aa). His92 serves as the catalytic Proton acceptor. Positions 218–244 form a cross-link, tryptophyl-tyrosyl-methioninium (Tyr-Met) (with W-91); it reads YVNPEGPDGNPDPVAAAHDIRETFARM. Heme b is bound at residue His259.

This sequence belongs to the peroxidase family. Peroxidase/catalase subfamily. Homodimer or homotetramer. The cofactor is heme b. In terms of processing, formation of the three residue Trp-Tyr-Met cross-link is important for the catalase, but not the peroxidase activity of the enzyme.

The enzyme catalyses H2O2 + AH2 = A + 2 H2O. It carries out the reaction 2 H2O2 = O2 + 2 H2O. In terms of biological role, bifunctional enzyme with both catalase and broad-spectrum peroxidase activity. The polypeptide is Catalase-peroxidase 1 (Burkholderia orbicola (strain MC0-3)).